The primary structure comprises 244 residues: tRNA (guanine-N(7)-)-methyltransferase (244 aa).

The span at 1 to 11 (MTDTHVPPPEL) shows a compositional bias: pro residues. The disordered stretch occupies residues 1–23 (MTDTHVPPPELPAAEEGEERPHR). The S-adenosyl-L-methionine site is built by glutamate 74, glutamate 99, aspartate 126, and aspartate 149. Residue aspartate 149 is part of the active site. Residues lysine 153, aspartate 185, and 222 to 225 (TKFE) contribute to the substrate site.

The protein belongs to the class I-like SAM-binding methyltransferase superfamily. TrmB family.

It carries out the reaction guanosine(46) in tRNA + S-adenosyl-L-methionine = N(7)-methylguanosine(46) in tRNA + S-adenosyl-L-homocysteine. Its pathway is tRNA modification; N(7)-methylguanine-tRNA biosynthesis. Its function is as follows. Catalyzes the formation of N(7)-methylguanine at position 46 (m7G46) in tRNA. The polypeptide is tRNA (guanine-N(7)-)-methyltransferase (Pseudomonas syringae pv. tomato (strain ATCC BAA-871 / DC3000)).